The sequence spans 65 residues: Ubiquinol-cytochrome-c reductase complex assembly factor 6 (65 aa).

Residues 1-9 are Mitochondrial matrix-facing; the sequence is MPAGVSWPR. A helical; Signal-anchor for type II membrane protein transmembrane segment spans residues 10-32; the sequence is YLRMFAASVLSMFAGAQVVHHYY. The Mitochondrial intermembrane segment spans residues 33-65; it reads RPDLSIPEIPPKPGELRTELLGLKERQMDSQKQ.

It belongs to the UQCC6 family. Highly expressed in skeletal and cardiac muscle (at protein level).

It is found in the mitochondrion inner membrane. Functionally, required for the assembly and stability of the mitochondrial ubiquinol-cytochrome c reductase complex (complex III (CIII) or cytochrome b-c1 complex), a multisubunit transmembrane complex that is part of the mitochondrial electron transport chain (ETC) which drives oxidative phosphorylation. Mediates early complex III biogenesis. Participates in regulating the levels of electron transport chain proteins, and therefore energy supply, in response to changes in energy demand. Also required for cytochrome c oxidase complex (complex IV) assembly. The chain is Ubiquinol-cytochrome-c reductase complex assembly factor 6 (uqcc6) from Danio rerio (Zebrafish).